Reading from the N-terminus, the 608-residue chain is Actin-interacting protein 1 (608 aa).

11 WD repeats span residues 62–101, 106–149, 150–190, 193–232, 237–276, 323–362, 366–403, 444–483, 487–526, 531–570, and 575–607; these read EHSC…HLLK, PIAG…GEIS, GQSK…FKMT, DHSR…LVGE, AHKG…LVSE, GHNK…NDRI, GHGN…YTDY, PIKY…LEPK, DHLG…PAHN, FHSA…KHTI, and HPQS…HVEN.

Belongs to the WD repeat AIP1 family. In terms of tissue distribution, expressed in pupal wing cells.

It is found in the cytoplasm. The protein localises to the cytoskeleton. Induces disassembly of actin filaments in conjunction with ADF/cofilin family proteins. Together with GMF, promotes Arp2/3-nucleated actin filament array disassembly. Essential for organismal and cell viability. Required for the development of normal wing cell planar polarity. In egg chambers and together with GMF, plays an important role in directional migration of border cell clusters. This is Actin-interacting protein 1 (flr) from Drosophila melanogaster (Fruit fly).